Consider the following 291-residue polypeptide: 33 kDa chaperonin (291 aa).

Intrachain disulfides connect Cys-235-Cys-237 and Cys-268-Cys-271.

It belongs to the HSP33 family. In terms of processing, under oxidizing conditions two disulfide bonds are formed involving the reactive cysteines. Under reducing conditions zinc is bound to the reactive cysteines and the protein is inactive.

Its subcellular location is the cytoplasm. In terms of biological role, redox regulated molecular chaperone. Protects both thermally unfolding and oxidatively damaged proteins from irreversible aggregation. Plays an important role in the bacterial defense system toward oxidative stress. This chain is 33 kDa chaperonin, found in Bacillus pumilus (strain SAFR-032).